A 402-amino-acid polypeptide reads, in one-letter code: Protein FAM53A (402 aa).

A Phosphoserine modification is found at Ser-119. Residues 170 to 215 (LVPGLPRRPVSPAGPTSPLTPRPASASSGFVDGSEGSTSSGPPWLS) are disordered. The Nuclear localization signal motif lies at 273–281 (RRVRRKRRR). Phosphoserine occurs at positions 306 and 309. The segment covering 323 to 333 (TLVSSPCNSQG) has biased composition (polar residues). Residues 323-402 (TLVSSPCNSQ…DLDLEQIENN (80 aa)) form a disordered region. Residues 336–345 (GIITPSSSPR) are compositionally biased toward low complexity.

It belongs to the FAM53 family.

It is found in the nucleus. Its function is as follows. May play an important role in neural development; the dorsomedial roof of the third ventricle. In Mus musculus (Mouse), this protein is Protein FAM53A.